The following is a 130-amino-acid chain: Small ribosomal subunit protein uS11c (130 aa).

The protein belongs to the universal ribosomal protein uS11 family. In terms of assembly, part of the 30S ribosomal subunit.

Its subcellular location is the plastid. The protein resides in the chloroplast. The sequence is that of Small ribosomal subunit protein uS11c from Spirogyra maxima (Green alga).